Reading from the N-terminus, the 212-residue chain is MEISMPPPQIYVEKTLAIIKPDIVDKEEEIQDIILRSGFTIVQRRKLRLSPEQCSNFYVEKYGKMFFPNLTAYMSSGPLVAMILARHKAISYWLELLGPNNSLVAKETHPDSLRAIYGTDDLRNALHGSNDFAAAEREIRFMFPEVIVEPIPIGQAAKDYLNLHIMPTLLEGLTELCKQKPADPLIWLADWLLKNNPNKPKLCHHPIVEEPY.

An NDK region spans residues 13-145 (EKTLAIIKPD…EREIRFMFPE (133 aa)).

Belongs to the NDK family. Component of the axonemal radial spoke complex 1 (RS1), at least composed of spoke head proteins RSPH1, RSPH3, RSPH9 and the cilia-specific component RSPH4A or sperm-specific component RSPH6A, spoke stalk proteins RSPH14, DNAJB13, DYDC1, ROPN1L and NME5, and the anchor protein IQUB. Interacts with IQUB. In terms of tissue distribution, specifically expressed in testis germinal cells.

It is found in the cell projection. The protein localises to the cilium. Its subcellular location is the cytoplasm. It localises to the cytoskeleton. The protein resides in the flagellum axoneme. Functionally, functions as part of axonemal radial spoke complexes that play an important part in the motility of sperm and cilia. Does not seem to have nucleoside diphosphate kinase (NDPK) activity. Confers protection from cell death by BAX and alters the cellular levels of several antioxidant enzymes including GPX5. May play a role in spermiogenesis by increasing the ability of late-stage spermatids to eliminate reactive oxygen species. Exhibits a 3'-5' exonuclease activity with a preference for single-stranded DNA, suggesting roles in DNA proofreading and repair. The protein is Nucleoside diphosphate kinase homolog 5 of Homo sapiens (Human).